Reading from the N-terminus, the 83-residue chain is Small ribosomal subunit protein bS16 (83 aa).

This sequence belongs to the bacterial ribosomal protein bS16 family.

The polypeptide is Small ribosomal subunit protein bS16 (Pseudomonas entomophila (strain L48)).